Here is a 187-residue protein sequence, read N- to C-terminus: MPVEETSTPQKLPQFRYHPDPVGTGSIVADEVSCVSCEQRRPYTYTGPVYAEEELNEAICPWCIADGSAASRFDATFTDAMWAVPDDVPEDVTEEVLCRTPGFTGWLQEEWLHHCGDAAAFLGPVGASEVADLPDALDALRNEYRGYDWPADKIEEFILTLDRNGLATAYLFRCLSCGVHLAYADFA.

Belongs to the UPF0167 family.

In Mycobacterium tuberculosis (strain CDC 1551 / Oshkosh), this protein is UPF0167 protein MT2352.